The sequence spans 526 residues: ATP synthase subunit alpha (526 aa).

ATP is bound at residue 171–178 (GDRQTGKT).

Belongs to the ATPase alpha/beta chains family. F-type ATPases have 2 components, CF(1) - the catalytic core - and CF(0) - the membrane proton channel. CF(1) has five subunits: alpha(3), beta(3), gamma(1), delta(1), epsilon(1). CF(0) has three main subunits: a(1), b(2) and c(9-12). The alpha and beta chains form an alternating ring which encloses part of the gamma chain. CF(1) is attached to CF(0) by a central stalk formed by the gamma and epsilon chains, while a peripheral stalk is formed by the delta and b chains.

It is found in the cell membrane. It carries out the reaction ATP + H2O + 4 H(+)(in) = ADP + phosphate + 5 H(+)(out). In terms of biological role, produces ATP from ADP in the presence of a proton gradient across the membrane. The alpha chain is a regulatory subunit. In Christiangramia forsetii (strain DSM 17595 / CGMCC 1.15422 / KT0803) (Gramella forsetii), this protein is ATP synthase subunit alpha.